The sequence spans 299 residues: Hydrogenase maturation factor HypB (299 aa).

Ni(2+) is bound by residues Cys2, Cys5, and Cys7. Positions 18–57 (EVGDDGHGHHHHDGHHDHDHDHDHHRGDHEHDDHHHAEDG) are disordered. Residues 31-57 (GHHDHDHDHDHHRGDHEHDDHHHAEDG) show a composition bias toward basic and acidic residues. The G-domain stretch occupies residues 107 to 268 (ALNFVSSPGS…LRVNPRLQTL (162 aa)). The Ni(2+) site is built by Cys167, His168, and Cys199. Zn(2+)-binding residues include Cys167, His168, and Cys199.

The protein belongs to the SIMIBI class G3E GTPase family. HypB/HupM subfamily.

Its function is as follows. Involved in the maturation of [NiFe] hydrogenases. Required for nickel insertion into the metal center of the hydrogenase. Exhibits a low intrinsic GTPase activity, which is essential for nickel insertion. Is able to bind 4 nickel ions per subunit. Can also bind zinc. The chain is Hydrogenase maturation factor HypB from Rhizobium leguminosarum bv. viciae.